The chain runs to 177 residues: Adenine phosphoribosyltransferase (177 aa).

This sequence belongs to the purine/pyrimidine phosphoribosyltransferase family. In terms of assembly, homodimer.

It is found in the cytoplasm. It carries out the reaction AMP + diphosphate = 5-phospho-alpha-D-ribose 1-diphosphate + adenine. The protein operates within purine metabolism; AMP biosynthesis via salvage pathway; AMP from adenine: step 1/1. Catalyzes a salvage reaction resulting in the formation of AMP, that is energically less costly than de novo synthesis. The sequence is that of Adenine phosphoribosyltransferase from Leuconostoc citreum (strain KM20).